The sequence spans 434 residues: Serine protease HTRA2, mitochondrial (434 aa).

A disordered region spans residues 34-65 (YSNNTANITTDSSSSSNNNSNRNNKNDNNNED). Low complexity predominate over residues 35 to 60 (SNNTANITTDSSSSSNNNSNRNNKND). A helical membrane pass occupies residues 74 to 92 (LVRFFVPFSLGAVASSLVM). The short motif at 85 to 88 (AVAS) is the IAP-binding element. The tract at residues 151-314 (SNGSGFVIEQ…IPIDYVKVFL (164 aa)) is serine protease. Residues His169, Asp201, and Ser278 each act as charge relay system in the active site. In terms of domain architecture, PDZ spans 337 to 424 (MGITMLTLTP…NMIIMRGVKQ (88 aa)).

It belongs to the peptidase S1C family. Interacts with th/DIAP1 (via BIR 2 domain).

The protein localises to the mitochondrion intermembrane space. Its subcellular location is the mitochondrion membrane. It carries out the reaction Cleavage of non-polar aliphatic amino-acids at the P1 position, with a preference for Val, Ile and Met. At the P2 and P3 positions, Arg is selected most strongly with a secondary preference for other hydrophilic residues.. Functionally, serine protease that shows proteolytic activity against a non-specific substrate beta-casein. Promotes or induces cell death either by direct binding to and inhibition of BIRC proteins (also called inhibitor of apoptosis proteins, IAPs), leading to an increase in caspase activity, or by a BIRC inhibition-independent, caspase-independent and serine protease activity-dependent mechanism. Can antagonize antiapoptotic activity of th/Diap1 by directly inducing the degradation of th/Diap1. In Drosophila willistoni (Fruit fly), this protein is Serine protease HTRA2, mitochondrial.